The following is a 310-amino-acid chain: MTLSDDPISPSTQESSNSSYVRSKEAEKNSPSQETDEEVLKGYESYRENPSNYDNDNILIYTDTFNLYDDMFEGSLDSTRNFGAQKDPNVLVMQRLLHNSGSLIGVDMEQDGIDLATLFADSTEDSKLPYVIYEGLEMQGEGYGTNTRGPFENKIDIGSFGKSGSVMNVEREKEKIVMIPTPRFGNATPQWTIKKKLSSYDIRPRCGRLILQSSSFNEHIGRHLPKDQMIKINVGVNVNVYDYDTGTLHELRLEYQRQYGLAHGWQEDFVRRRHLKQKDEIGLLWDFSSSRLQFGVISRNTGPGLWETKD.

Polar residues predominate over residues 1–21 (MTLSDDPISPSTQESSNSSYV). Positions 1-39 (MTLSDDPISPSTQESSNSSYVRSKEAEKNSPSQETDEEV) are disordered. The TF-B3 DNA-binding region spans 205–300 (RCGRLILQSS…RLQFGVISRN (96 aa)).

The protein localises to the nucleus. The sequence is that of B3 domain-containing protein At4g02870 (ARF42) from Arabidopsis thaliana (Mouse-ear cress).